The sequence spans 82 residues: Progonadoliberin-3 (82 aa).

A signal peptide spans 1–23; that stretch reads MDLSNRTVVQVVVLALVAQVTLS. Q24 is modified (pyrrolidone carboxylic acid). A Glycine amide modification is found at G33.

Belongs to the GnRH family. In terms of tissue distribution, brain.

Its subcellular location is the secreted. Functionally, stimulates the secretion of gonadotropins. This is Progonadoliberin-3 (gnrh3) from Oncorhynchus nerka (Sockeye salmon).